The chain runs to 527 residues: Nucleus accumbens-associated protein 1 (527 aa).

The 65-residue stretch at 30 to 94 (CDVSVVVKGH…CYTGRLSMNV (65 aa)) folds into the BTB domain. Residues 131–153 (QGLHAEEAPSSEPQSPVAQTSGW) form a disordered region. Positions 141–152 (SEPQSPVAQTSG) are enriched in polar residues. A Glycyl lysine isopeptide (Lys-Gly) (interchain with G-Cter in SUMO1); alternate cross-link involves residue Lys-167. A Glycyl lysine isopeptide (Lys-Gly) (interchain with G-Cter in SUMO2); alternate cross-link involves residue Lys-167. Residue Lys-183 forms a Glycyl lysine isopeptide (Lys-Gly) (interchain with G-Cter in SUMO2) linkage. Phosphoserine is present on Ser-188. The tract at residues 210 to 292 (DLAANRPHQP…DEEEDGGEEG (83 aa)) is disordered. The segment covering 225-251 (APVVAAAQPAVAAGAGQPAGGVAAAGG) has biased composition (low complexity). Positions 255-277 (GPSTSERTSPGTSSAYTSDSPGS) are enriched in polar residues. Ser-259 is modified (phosphoserine; by PKC). Acidic residues predominate over residues 281-292 (EEDEEEDGGEEG). Glycyl lysine isopeptide (Lys-Gly) (interchain with G-Cter in SUMO2) cross-links involve residues Lys-318, Lys-452, Lys-480, Lys-483, and Lys-498. A BEN domain is found at 374–471 (GTNVYITRAQ…DMCTNARRVV (98 aa)).

Homooligomer; mediated by the BTB domain. Interacts with HDAC3 and HDAC4. Interacts (via BTB domain) with CUL3, PSMD7 and RCOR1. Overexpressed in several types of carcinomas including ovarian serous carcinomas. Expression levels positively correlate with tumor recurrence in ovarian serous carcinomas, and intense immunoreactivity in primary ovarian tumors predicts early recurrence. Up-regulated in ovarian carcinomas after chemotherapy, suggesting a role in development of chemotherapy resistance in ovarian cancer.

Its subcellular location is the nucleus. It is found in the cytoplasm. In terms of biological role, functions as a transcriptional repressor. Seems to function as a transcriptional corepressor in neuronal cells through recruitment of HDAC3 and HDAC4. Contributes to tumor progression, and tumor cell proliferation and survival. This may be mediated at least in part through repressing transcriptional activity of GADD45GIP1. Required for recruiting the proteasome from the nucleus to the cytoplasm and dendritic spines. The polypeptide is Nucleus accumbens-associated protein 1 (NACC1) (Homo sapiens (Human)).